A 478-amino-acid chain; its full sequence is ATP synthase subunit beta (478 aa).

160–167 (GGAGVGKT) is an ATP binding site.

The protein belongs to the ATPase alpha/beta chains family. As to quaternary structure, F-type ATPases have 2 components, CF(1) - the catalytic core - and CF(0) - the membrane proton channel. CF(1) has five subunits: alpha(3), beta(3), gamma(1), delta(1), epsilon(1). CF(0) has three main subunits: a(1), b(2) and c(9-12). The alpha and beta chains form an alternating ring which encloses part of the gamma chain. CF(1) is attached to CF(0) by a central stalk formed by the gamma and epsilon chains, while a peripheral stalk is formed by the delta and b chains.

The protein localises to the cell inner membrane. The enzyme catalyses ATP + H2O + 4 H(+)(in) = ADP + phosphate + 5 H(+)(out). Produces ATP from ADP in the presence of a proton gradient across the membrane. The catalytic sites are hosted primarily by the beta subunits. This is ATP synthase subunit beta from Orientia tsutsugamushi (strain Boryong) (Rickettsia tsutsugamushi).